A 103-amino-acid polypeptide reads, in one-letter code: Truncated secreted TNF-receptor-like protein A53 (103 aa).

The TNFR-Cys 1 repeat unit spans residues 36 to 73 (SCDKGEYLDKRHNQCCNRCPPGEFAKVRCNGNDNTKCE). 3 cysteine pairs are disulfide-bonded: Cys37–Cys50, Cys51–Cys64, and Cys54–Cys72. Residues 74-103 (RCPPHTYTTIPIILMDVINVENAQQDHLIR) form a TNFR-Cys 2; truncated repeat.

The protein belongs to the poxviridae A53R protein family.

The polypeptide is Truncated secreted TNF-receptor-like protein A53 (Vaccinia virus (strain Copenhagen) (VACV)).